A 229-amino-acid chain; its full sequence is Putative N-acetylmannosamine-6-phosphate 2-epimerase 2 (229 aa).

Belongs to the NanE family.

The enzyme catalyses an N-acyl-D-glucosamine 6-phosphate = an N-acyl-D-mannosamine 6-phosphate. It participates in amino-sugar metabolism; N-acetylneuraminate degradation; D-fructose 6-phosphate from N-acetylneuraminate: step 3/5. Functionally, converts N-acetylmannosamine-6-phosphate (ManNAc-6-P) to N-acetylglucosamine-6-phosphate (GlcNAc-6-P). The chain is Putative N-acetylmannosamine-6-phosphate 2-epimerase 2 from Salmonella paratyphi A (strain ATCC 9150 / SARB42).